The chain runs to 201 residues: ATP-dependent Clp protease proteolytic subunit (201 aa).

Residue serine 100 is the Nucleophile of the active site. The active site involves histidine 125.

The protein belongs to the peptidase S14 family. Component of the chloroplastic Clp protease core complex.

It localises to the plastid. It is found in the chloroplast stroma. The enzyme catalyses Hydrolysis of proteins to small peptides in the presence of ATP and magnesium. alpha-casein is the usual test substrate. In the absence of ATP, only oligopeptides shorter than five residues are hydrolyzed (such as succinyl-Leu-Tyr-|-NHMec, and Leu-Tyr-Leu-|-Tyr-Trp, in which cleavage of the -Tyr-|-Leu- and -Tyr-|-Trp bonds also occurs).. Cleaves peptides in various proteins in a process that requires ATP hydrolysis. Has a chymotrypsin-like activity. Plays a major role in the degradation of misfolded proteins. The sequence is that of ATP-dependent Clp protease proteolytic subunit from Chloranthus spicatus (Chulantree).